The following is a 408-amino-acid chain: Argininosuccinate synthase (408 aa).

ATP-binding positions include 14–22 (AYSGGLDTS) and A41. The L-citrulline site is built by Y92 and S97. G122 is an ATP binding site. Positions 124, 128, and 129 each coordinate L-aspartate. N128 is a binding site for L-citrulline. L-citrulline contacts are provided by R132, S181, S190, E266, and Y278.

Belongs to the argininosuccinate synthase family. Type 1 subfamily. As to quaternary structure, homotetramer.

It localises to the cytoplasm. The catalysed reaction is L-citrulline + L-aspartate + ATP = 2-(N(omega)-L-arginino)succinate + AMP + diphosphate + H(+). Its pathway is amino-acid biosynthesis; L-arginine biosynthesis; L-arginine from L-ornithine and carbamoyl phosphate: step 2/3. In Pelobacter propionicus (strain DSM 2379 / NBRC 103807 / OttBd1), this protein is Argininosuccinate synthase.